The chain runs to 416 residues: Probable glucan 1,3-beta-glucosidase A (416 aa).

The N-terminal stretch at 1 to 22 (MIFKFSQKALVALCLVVGLAEA) is a signal peptide. Residue Glu-211 is the Proton donor of the active site. Cystine bridges form between Cys-291–Cys-415 and Cys-316–Cys-342. Residue Glu-308 is the Nucleophile of the active site.

It belongs to the glycosyl hydrolase 5 (cellulase A) family. As to quaternary structure, monomer. It depends on Mn(2+) as a cofactor.

It is found in the secreted. The catalysed reaction is Successive hydrolysis of beta-D-glucose units from the non-reducing ends of (1-&gt;3)-beta-D-glucans, releasing alpha-glucose.. Its function is as follows. Beta-glucanases participate in the metabolism of beta-glucan, the main structural component of the cell wall. It could also function biosynthetically as a transglycosylase. The protein is Probable glucan 1,3-beta-glucosidase A (exgA) of Neosartorya fischeri (strain ATCC 1020 / DSM 3700 / CBS 544.65 / FGSC A1164 / JCM 1740 / NRRL 181 / WB 181) (Aspergillus fischerianus).